The primary structure comprises 234 residues: Phosphoglycolate phosphatase (234 aa).

Aspartate 8 serves as the catalytic Nucleophile. The Mg(2+) site is built by aspartate 8 and aspartate 10. Lysine 155 contacts substrate. The Mg(2+) site is built by aspartate 178 and aspartate 182.

Belongs to the archaeal SPP-like hydrolase family. Mg(2+) serves as cofactor.

The catalysed reaction is 2-phosphoglycolate + H2O = glycolate + phosphate. Functionally, catalyzes the dephosphorylation of 2-phosphoglycolate. This Thermococcus sibiricus (strain DSM 12597 / MM 739) protein is Phosphoglycolate phosphatase.